Consider the following 240-residue polypeptide: MAEKREPAAGWPILKGEYDVGDPENCVAVITLGSHLDGGPMLEAGASITGPCKTENLGLEKVVSHIIANPNIRYLVVTGSEVKGHITGEAFIMLHKNGVSDNRIVNASGAIPYVENLTEEAVQRYQEQIECIDLIGTEDMGTISSKIKELAAKDPDAFDADPLVIEVGGEAEEEEEVGGLKPMASEISVIRGRILDIEREMARIGEFNKFHAGVHAGKFEGIMIGLAITLSLLGLILFGR.

Topologically, residues 1 to 218 are cytoplasmic; sequence MAEKREPAAG…KFHAGVHAGK (218 aa). His-85 contacts 5-hydroxybenzimidazolylcob(I)amide. A helical transmembrane segment spans residues 219–239; that stretch reads FEGIMIGLAITLSLLGLILFG. Position 240 (Arg-240) is a topological domain, extracellular.

Belongs to the MtrA family. The complex is composed of 8 subunits; MtrA, MtrB, MtrC, MtrD, MtrE, MtrF, MtrG and MtrH. The cofactor is 5-hydroxybenzimidazolylcob(I)amide.

The protein resides in the cell membrane. It carries out the reaction 5-methyl-5,6,7,8-tetrahydromethanopterin + coenzyme M + 2 Na(+)(in) = 5,6,7,8-tetrahydromethanopterin + methyl-coenzyme M + 2 Na(+)(out). It functions in the pathway one-carbon metabolism; methanogenesis from CO(2); methyl-coenzyme M from 5,10-methylene-5,6,7,8-tetrahydromethanopterin: step 2/2. Functionally, part of a complex that catalyzes the formation of methyl-coenzyme M and tetrahydromethanopterin from coenzyme M and methyl-tetrahydromethanopterin. This is an energy-conserving, sodium-ion translocating step. The chain is Tetrahydromethanopterin S-methyltransferase subunit A from Methanohalophilus mahii (strain ATCC 35705 / DSM 5219 / SLP).